Reading from the N-terminus, the 158-residue chain is NAD(P)H-quinone oxidoreductase subunit N (158 aa).

The protein belongs to the complex I NdhN subunit family. In terms of assembly, NDH-1 can be composed of about 15 different subunits; different subcomplexes with different compositions have been identified which probably have different functions.

The protein localises to the cellular thylakoid membrane. It carries out the reaction a plastoquinone + NADH + (n+1) H(+)(in) = a plastoquinol + NAD(+) + n H(+)(out). It catalyses the reaction a plastoquinone + NADPH + (n+1) H(+)(in) = a plastoquinol + NADP(+) + n H(+)(out). In terms of biological role, NDH-1 shuttles electrons from an unknown electron donor, via FMN and iron-sulfur (Fe-S) centers, to quinones in the respiratory and/or the photosynthetic chain. The immediate electron acceptor for the enzyme in this species is believed to be plastoquinone. Couples the redox reaction to proton translocation, and thus conserves the redox energy in a proton gradient. Cyanobacterial NDH-1 also plays a role in inorganic carbon-concentration. This is NAD(P)H-quinone oxidoreductase subunit N from Cyanothece sp. (strain PCC 7425 / ATCC 29141).